We begin with the raw amino-acid sequence, 444 residues long: Signal recognition particle 54 kDa protein (444 aa).

GTP-binding positions include 106-113 (GLQGSGKT), 187-191 (DTAGR), and 245-248 (SKLD).

It belongs to the GTP-binding SRP family. SRP54 subfamily. Part of the signal recognition particle protein translocation system, which is composed of SRP and FtsY. Archaeal SRP consists of a 7S RNA molecule of 300 nucleotides and two protein subunits: SRP54 and SRP19.

It localises to the cytoplasm. It catalyses the reaction GTP + H2O = GDP + phosphate + H(+). Its function is as follows. Involved in targeting and insertion of nascent membrane proteins into the cytoplasmic membrane. Binds to the hydrophobic signal sequence of the ribosome-nascent chain (RNC) as it emerges from the ribosomes. The SRP-RNC complex is then targeted to the cytoplasmic membrane where it interacts with the SRP receptor FtsY. This Methanosphaera stadtmanae (strain ATCC 43021 / DSM 3091 / JCM 11832 / MCB-3) protein is Signal recognition particle 54 kDa protein.